The primary structure comprises 282 residues: Nudix hydrolase 7 (282 aa).

The 133-residue stretch at 101–233 (SHVVGAGALV…KNEMFKFMAN (133 aa)) folds into the Nudix hydrolase domain. The Nudix box signature appears at 139–160 (GVINEGEDIWTGVAREVEEETG). Mg(2+) contacts are provided by Glu154 and Glu158.

The protein belongs to the Nudix hydrolase family. Homodimer. Interacts with RACK1A, GG1 and GG2. The cofactor is Mg(2+). In terms of tissue distribution, expressed in stems, leaves, roots, flowers and siliques.

Its subcellular location is the nucleus. The protein localises to the cytoplasm. It localises to the cell membrane. The catalysed reaction is ADP-D-ribose + H2O = D-ribose 5-phosphate + AMP + 2 H(+). It catalyses the reaction NAD(+) + H2O = beta-nicotinamide D-ribonucleotide + AMP + 2 H(+). The enzyme catalyses NADH + H2O = reduced beta-nicotinamide D-ribonucleotide + AMP + 2 H(+). With respect to regulation, not inhibited by fluoride. Its function is as follows. Mediates the hydrolysis of some nucleoside diphosphate derivatives. Can use both NADH and ADP-ribose as substrates, but not 8-oxo-dGTP, cyclic ADP-ribose, GDP-mannose, UDP-glucose, ATP, or GTP. Exerts negative control of EDS1 signaling. The sequence is that of Nudix hydrolase 7 (NUDT7) from Arabidopsis thaliana (Mouse-ear cress).